Reading from the N-terminus, the 600-residue chain is Na(+)/dicarboxylate cotransporter 3 (600 aa).

Topologically, residues 1–16 (MAALAALAKKVWSARR) are cytoplasmic. A helical transmembrane segment spans residues 17 to 37 (LLVLLLVPLALLPILFALPPK). At 38-55 (EGRCLYVILLMAVYWCTE) the chain is on the extracellular side. Residues 56-76 (ALPLSVTALLPIILFPFMGIL) traverse the membrane as a helical segment. The Cytoplasmic portion of the chain corresponds to 77-82 (PSSKVC). A helical transmembrane segment spans residues 83–103 (PQYFLDTNFLFLSGLIMASAI). The Extracellular portion of the chain corresponds to 104-137 (EEWNLHRRIALKVLMLVGVQPARLILGMMVTTSF). The helical transmembrane segment at 138–158 (LSMWLSNTASTAMMLPIASAI) threads the bilayer. Residues 159 to 229 (LKSLFGQREA…KEEEHRRNIW (71 aa)) are Cytoplasmic-facing. Residues 230 to 250 (KGFLISIPYSASIGGTATLTG) traverse the membrane as a helical segment. The Extracellular segment spans residues 251–278 (TAPNLILLGQLKSFFPQCDVVNFGSWFI). The chain crosses the membrane as a helical span at residues 279 to 299 (FAFPLMLLFLLVGWLWISFLY). At 300 to 336 (GGMSWRSWRKKKSKIRADAEDQAKAVIQEEFQNLGPI) the chain is on the cytoplasmic side. A helical transmembrane segment spans residues 337–357 (KFAEQAVFILFCTFAILLFSR). The Extracellular segment spans residues 358 to 372 (DPKFIPGWASLFAPG). The helical transmembrane segment at 373-393 (FVSDAVTGVAIVTILFFFPSQ) threads the bilayer. The Cytoplasmic segment spans residues 394-422 (KPSLKWWFDFKAPNSETEPLLSWKKAQET). Positions 423-443 (VPWNIILLLGGGFAMAKGCEE) form an intramembrane region, helical. Residues 444-461 (SGLSAWIGGQLHPLEHVP) lie on the Cytoplasmic side of the membrane. The helical transmembrane segment at 462–482 (PLLAVLLITVVIAFFTEFASN) threads the bilayer. At 483-505 (TATIIIFLPVLAELAIRLHVHPL) the chain is on the extracellular side. Residues 506-526 (YLMIPGTVGCSYAFMLPVSTP) form a helical membrane-spanning segment. The Cytoplasmic portion of the chain corresponds to 527-546 (PNSIAFSTGHLLVKDMVRTG). The helical transmembrane segment at 547 to 567 (LLMNLMGVLLLSLAMNTWAQT) threads the bilayer. At 568-600 (IFQLGTFPDWANTHAANATALPPALTNNTVQTF) the chain is on the extracellular side. 2 N-linked (GlcNAc...) asparagine glycosylation sites follow: N584 and N594.

Belongs to the SLC13A/DASS transporter (TC 2.A.47) family. NADC subfamily. Highly expressed in kidney, and at much lower levels in brain.

It is found in the cell membrane. The enzyme catalyses succinate(out) + 3 Na(+)(out) = succinate(in) + 3 Na(+)(in). The catalysed reaction is 2-oxoglutarate(out) + 3 Na(+)(out) = 2-oxoglutarate(in) + 3 Na(+)(in). It catalyses the reaction N-acetyl-L-aspartate(out) + 3 Na(+)(out) = N-acetyl-L-aspartate(in) + 3 Na(+)(in). It carries out the reaction fumarate(out) + 3 Na(+)(out) = fumarate(in) + 3 Na(+)(in). The enzyme catalyses glutarate(out) + 3 Na(+)(out) = glutarate(in) + 3 Na(+)(in). The catalysed reaction is 2,2-dimethylsuccinate(out) + 3 Na(+)(out) = 2,2-dimethylsuccinate(in) + 3 Na(+)(in). It catalyses the reaction 2,3-dimethylsuccinate(out) + 3 Na(+)(out) = 2,3-dimethylsuccinate(in) + 3 Na(+)(in). It carries out the reaction malate(out) + 3 Na(+)(out) = malate(in) + 3 Na(+)(in). The enzyme catalyses itaconate(out) + 3 Na(+)(out) = itaconate(in) + 3 Na(+)(in). High-affinity sodium-dicarboxylate cotransporter that accepts a range of substrates with 4-6 carbon atoms, such as the citric acid cycle intermediates succinate and alpha-ketoglutarate (2-oxoglutarate), as well as other compounds including N-acetyl-L-aspartate. Transports the dicarboxylate into the cell with a probable stoichiometry of 3 Na(+) for 1 divalent dicarboxylate, rendering the process electrogenic. Can transport citrate in a Na(+)-dependent manner, recognizing the divalent form of citrate rather than the trivalent form which is normally found in blood. Imports itaconate in hepatocytes leading to activation of TFEB-dependent lysosomal biogenesis involved in antibacterial innate immune response. The polypeptide is Na(+)/dicarboxylate cotransporter 3 (Slc13a3) (Mus musculus (Mouse)).